The chain runs to 319 residues: tRNA U34 carboxymethyltransferase (319 aa).

Carboxy-S-adenosyl-L-methionine contacts are provided by residues lysine 88, tryptophan 102, lysine 107, glycine 126, 176 to 177 (LE), methionine 192, tyrosine 196, and arginine 311.

It belongs to the class I-like SAM-binding methyltransferase superfamily. CmoB family. In terms of assembly, homotetramer.

It carries out the reaction carboxy-S-adenosyl-L-methionine + 5-hydroxyuridine(34) in tRNA = 5-carboxymethoxyuridine(34) in tRNA + S-adenosyl-L-homocysteine + H(+). Its function is as follows. Catalyzes carboxymethyl transfer from carboxy-S-adenosyl-L-methionine (Cx-SAM) to 5-hydroxyuridine (ho5U) to form 5-carboxymethoxyuridine (cmo5U) at position 34 in tRNAs. The polypeptide is tRNA U34 carboxymethyltransferase (Pseudomonas savastanoi pv. phaseolicola (strain 1448A / Race 6) (Pseudomonas syringae pv. phaseolicola (strain 1448A / Race 6))).